The sequence spans 149 residues: Cytochrome c-type biogenesis protein CcmE (149 aa).

The Cytoplasmic segment spans residues 1–7; the sequence is MKARHKR. Residues 8–28 form a helical; Signal-anchor for type II membrane protein membrane-spanning segment; that stretch reads LGLIVAGLAALGLGAALVLSA. Residues 29–149 are Periplasmic-facing; that stretch reads FQKNLVFFFT…GAPALAGALK (121 aa). Positions 123 and 127 each coordinate heme.

The protein belongs to the CcmE/CycJ family.

It is found in the cell inner membrane. Its function is as follows. Heme chaperone required for the biogenesis of c-type cytochromes. Transiently binds heme delivered by CcmC and transfers the heme to apo-cytochromes in a process facilitated by CcmF and CcmH. This chain is Cytochrome c-type biogenesis protein CcmE, found in Polaromonas naphthalenivorans (strain CJ2).